The primary structure comprises 438 residues: UPF0229 protein R01398 (438 aa).

The segment at 55 to 107 (PARGVNEPAFQPDSNSGERRHVLPGNREFAAGDRIPKRGSGGGAGNAGAGTGQ) is disordered. Gly residues predominate over residues 93-105 (GSGGGAGNAGAGT).

Belongs to the UPF0229 family.

The chain is UPF0229 protein R01398 from Rhizobium meliloti (strain 1021) (Ensifer meliloti).